Here is a 541-residue protein sequence, read N- to C-terminus: Phosphoenolpyruvate carboxykinase (ATP) (541 aa).

Substrate is bound by residues R64, Y206, and K212. Residues K212, H231, and 247–255 each bind ATP; that span reads GLSGTGKTT. Mn(2+) is bound by residues K212 and H231. D268 is a Mn(2+) binding site. E296, R332, and T454 together coordinate ATP. R332 lines the substrate pocket.

Belongs to the phosphoenolpyruvate carboxykinase (ATP) family. In terms of assembly, monomer. The cofactor is Mn(2+).

It is found in the cytoplasm. It carries out the reaction oxaloacetate + ATP = phosphoenolpyruvate + ADP + CO2. It participates in carbohydrate biosynthesis; gluconeogenesis. In terms of biological role, involved in the gluconeogenesis. Catalyzes the conversion of oxaloacetate (OAA) to phosphoenolpyruvate (PEP) through direct phosphoryl transfer between the nucleoside triphosphate and OAA. The polypeptide is Phosphoenolpyruvate carboxykinase (ATP) (Wigglesworthia glossinidia brevipalpis).